The primary structure comprises 723 residues: LIM domain-binding protein 3 (723 aa).

The PDZ domain occupies 1-84 (MSYSVTLTGP…NLSLTLQKSK (84 aa)). Phosphoserine is present on residues S44, S98, and D112. 2 disordered regions span residues 89-134 (ISTT…GALE) and 164-193 (SPVA…RQYN). T119 carries the post-translational modification Phosphothreonine. Residues S121 and S123 each carry the phosphoserine modification. S214 is subject to Phosphoserine. R216 carries the post-translational modification Omega-N-methylarginine. S220, S251, and D288 each carry phosphoserine. Disordered stretches follow at residues 280–423 (GTEY…YSPT) and 436–525 (SPAP…PQVT). An Omega-N-methylarginine modification is found at A291. Over residues 309–376 (ATSPLLPASA…AAAASPAPSA (68 aa)) the composition is skewed to low complexity. Phosphoserine is present on I327. At S330 the chain carries Omega-N-methylarginine. A compositionally biased stretch (pro residues) spans 436–466 (SPAPTYTPSPAPTYSPSPAPAYTPSPAPNYT). Residues 490–509 (DSFSQKFAPGKSTTTVSKQT) are compositionally biased toward polar residues. Omega-N-methylarginine occurs at positions 512 and 529. 3 LIM zinc-binding domains span residues 545 to 603 (PLCG…QFFA), 604 to 663 (PICA…LFST), and 664 to 723 (KCHG…AINV).

Interacts via its LIM domains with various PKC isoforms. Interacts via its PDZ domain with the ACTN2 C-terminal region. Interacts with MYOZ1, MYOZ2 and MYOZ3. In terms of tissue distribution, expressed primarily in adult heart and skeletal muscle, and detected at lower levels in lung. Isoforms are expressed in a tissue-specific manner. Isoform 1, isoform 3 and isoform 5 are expressed in heart, whereas isoform 2, isoform 4 and isoform 6 are expressed in skeletal muscle.

Its subcellular location is the cytoplasm. It localises to the perinuclear region. The protein resides in the cell projection. The protein localises to the pseudopodium. It is found in the cytoskeleton. Its subcellular location is the myofibril. It localises to the sarcomere. The protein resides in the z line. In terms of biological role, may function as an adapter in striated muscle to couple protein kinase C-mediated signaling via its LIM domains to the cytoskeleton. This Mus musculus (Mouse) protein is LIM domain-binding protein 3.